The primary structure comprises 310 residues: Olfactory receptor 2A1/2A42 (310 aa).

Residues 1 to 24 (MGENQTMVTEFLLLGFLLGPRIQM) lie on the Extracellular side of the membrane. An N-linked (GlcNAc...) asparagine glycan is attached at Asn-4. Residues 25–48 (LLFGLFSLFYIFTLLGNGAILGLI) form a helical membrane-spanning segment. The Cytoplasmic portion of the chain corresponds to 49–56 (SLDSRLHT). Residues 57 to 78 (PMYFFLSHLAVVDIAYTRNTVP) form a helical membrane-spanning segment. At 79–99 (QMLANLLHPAKPISFAGCMTQ) the chain is on the extracellular side. Cysteines 96 and 188 form a disulfide. Residues 100-119 (TFLCLSFGHSECLLLVLMSY) form a helical membrane-spanning segment. At 120-138 (DRYVAICHPLRYSVIMTWR) the chain is on the cytoplasmic side. A helical membrane pass occupies residues 139-157 (VCITLAVTSWTCGSLLALA). At 158 to 195 (HVVLILRLPFSGPHEINHFFCEILSVLRLACADTWLNQ) the chain is on the extracellular side. A helical membrane pass occupies residues 196–218 (VVIFAACVFFLVGPPSLVLVSYS). The Cytoplasmic portion of the chain corresponds to 219 to 235 (HILAAILRIQSGEGRRK). Residues 236–258 (AFSTCSSHLCVVGLFFGSAIIMY) traverse the membrane as a helical segment. Over 259–271 (MAPKSRHPEEQQK) the chain is Extracellular. A helical transmembrane segment spans residues 272 to 291 (VFFLFYSFFNPTLNPLIYSL). The Cytoplasmic portion of the chain corresponds to 292–310 (RNGEVKGALRRALGKESHS).

Belongs to the G-protein coupled receptor 1 family.

The protein resides in the cell membrane. Odorant receptor. The polypeptide is Olfactory receptor 2A1/2A42 (OR2A1) (Homo sapiens (Human)).